The chain runs to 557 residues: Dihydroxy-acid dehydratase (557 aa).

Asp78 serves as a coordination point for Mg(2+). Residue Cys119 coordinates [2Fe-2S] cluster. Positions 120 and 121 each coordinate Mg(2+). The residue at position 121 (Lys121) is an N6-carboxylysine. Residue Cys192 participates in [2Fe-2S] cluster binding. Glu442 is a binding site for Mg(2+). Ser468 serves as the catalytic Proton acceptor.

It belongs to the IlvD/Edd family. As to quaternary structure, homodimer. Requires [2Fe-2S] cluster as cofactor. It depends on Mg(2+) as a cofactor.

The enzyme catalyses (2R)-2,3-dihydroxy-3-methylbutanoate = 3-methyl-2-oxobutanoate + H2O. It catalyses the reaction (2R,3R)-2,3-dihydroxy-3-methylpentanoate = (S)-3-methyl-2-oxopentanoate + H2O. It participates in amino-acid biosynthesis; L-isoleucine biosynthesis; L-isoleucine from 2-oxobutanoate: step 3/4. It functions in the pathway amino-acid biosynthesis; L-valine biosynthesis; L-valine from pyruvate: step 3/4. Functionally, functions in the biosynthesis of branched-chain amino acids. Catalyzes the dehydration of (2R,3R)-2,3-dihydroxy-3-methylpentanoate (2,3-dihydroxy-3-methylvalerate) into 2-oxo-3-methylpentanoate (2-oxo-3-methylvalerate) and of (2R)-2,3-dihydroxy-3-methylbutanoate (2,3-dihydroxyisovalerate) into 2-oxo-3-methylbutanoate (2-oxoisovalerate), the penultimate precursor to L-isoleucine and L-valine, respectively. This chain is Dihydroxy-acid dehydratase, found in Bacillus anthracis (strain A0248).